The following is a 70-amino-acid chain: DNA gyrase inhibitor YacG (70 aa).

Residues cysteine 20, cysteine 23, cysteine 35, and cysteine 39 each contribute to the Zn(2+) site.

This sequence belongs to the DNA gyrase inhibitor YacG family. Interacts with GyrB. It depends on Zn(2+) as a cofactor.

In terms of biological role, inhibits all the catalytic activities of DNA gyrase by preventing its interaction with DNA. Acts by binding directly to the C-terminal domain of GyrB, which probably disrupts DNA binding by the gyrase. This Rhizobium etli (strain CIAT 652) protein is DNA gyrase inhibitor YacG.